A 142-amino-acid polypeptide reads, in one-letter code: Hemoglobin subunit alpha-B (142 aa).

Residues 2 to 142 (VLSPTDKSNV…VSTVLTSKYR (141 aa)) form the Globin domain. Histidine 59 lines the O2 pocket. Histidine 88 is a heme b binding site.

This sequence belongs to the globin family. In terms of assembly, heterotetramer of two alpha chains and two beta chains. As to expression, red blood cells.

Its function is as follows. Involved in oxygen transport from the lung to the various peripheral tissues. The polypeptide is Hemoglobin subunit alpha-B (HBAB) (Otolemur crassicaudatus (Brown greater galago)).